The chain runs to 892 residues: Alanine--tRNA ligase (892 aa).

Positions 577, 581, 680, and 684 each coordinate Zn(2+).

Belongs to the class-II aminoacyl-tRNA synthetase family. Zn(2+) is required as a cofactor.

Its subcellular location is the cytoplasm. It carries out the reaction tRNA(Ala) + L-alanine + ATP = L-alanyl-tRNA(Ala) + AMP + diphosphate. Catalyzes the attachment of alanine to tRNA(Ala) in a two-step reaction: alanine is first activated by ATP to form Ala-AMP and then transferred to the acceptor end of tRNA(Ala). Also edits incorrectly charged Ser-tRNA(Ala) and Gly-tRNA(Ala) via its editing domain. The sequence is that of Alanine--tRNA ligase from Paenarthrobacter aurescens (strain TC1).